Consider the following 185-residue polypeptide: Casparian strip membrane protein 2 (185 aa).

The Cytoplasmic portion of the chain corresponds to 1 to 25 (MKAVSIEAGEGSKAKRVHGVNRGIS). Residues 26-46 (VFDLVLRIVALVGTLASAVAM) form a helical membrane-spanning segment. At 47–73 (GTADQALSFSTQIVNFEAQYDDIDAFK) the chain is on the extracellular side. The chain crosses the membrane as a helical span at residues 74–94 (FFVVSNSITCVYLALSIPISI). Topologically, residues 95 to 106 (FHIIRSRAGKSR) are cytoplasmic. The chain crosses the membrane as a helical span at residues 107-127 (VLLIVLDAIMLVFLTSGASAA). Over 128–160 (AAIVYLAHNGNTSTNWFSICQQYTDFCQRSAGS) the chain is Extracellular. N-linked (GlcNAc...) asparagine glycosylation is present at N138. Residues 161–181 (LIGSFGAMALMVLLIILSSIA) form a helical membrane-spanning segment. Over 182–185 (LSRR) the chain is Cytoplasmic.

This sequence belongs to the Casparian strip membrane proteins (CASP) family. As to quaternary structure, homodimer and heterodimers.

The protein localises to the cell membrane. Functionally, regulates membrane-cell wall junctions and localized cell wall deposition. Required for establishment of the Casparian strip membrane domain (CSD) and the subsequent formation of Casparian strips, a cell wall modification of the root endodermis that determines an apoplastic barrier between the intraorganismal apoplasm and the extraorganismal apoplasm and prevents lateral diffusion. This chain is Casparian strip membrane protein 2, found in Solanum demissum (Wild potato).